Consider the following 135-residue polypeptide: Alpha-ketoglutarate dehydrogenase subunit 4, mitochondrial (135 aa).

It belongs to the alpha-ketoglutarate dehydrogenase component 4 family. Component of the 2-oxoglutarate dehydrogenase complex (OGDC), also called alpha-ketoglutarate dehydrogenase (KGDH) complex. The copmplex is composed of the catalytic subunits OGDH (2-oxoglutarate dehydrogenase; also called E1 subunit), DLST (dihydrolipoamide succinyltransferase; also called E2 subunit) and DLD (dihydrolipoamide dehydrogenase; also called E3 subunit), and the assembly factor KGD4. Within OGDC, interacts (via N-terminus) with E3 subunit and (via C-terminus) with the complex core formed by E1 and E2 subunits.

It localises to the mitochondrion. Its function is as follows. Molecular adapter that is necessary to a form a stable 2-oxoglutarate dehydrogenase enzyme complex (OGDC). Required for incorporation of the E3 subunit into the E1-E2 core of mitochondrial OGDC, and acting as a stability factor for the fully assembled complex. The sequence is that of Alpha-ketoglutarate dehydrogenase subunit 4, mitochondrial (KGD4) from Chaetomium thermophilum (strain DSM 1495 / CBS 144.50 / IMI 039719) (Thermochaetoides thermophila).